The chain runs to 156 residues: MGRFIFVSFGLLVVFLSLSGTGADCPSDWSSFRRYCYKPFKQLKTWEDAERFCWEQVKGAHLVSIESSGEGDFVAQLLSENIKTTKYHVWIGLSIQNKRQQCRSIWSDGSSVSYENLVKPFSKKCFVLKKESEFHKWFNIYCGERNLFMCKFLQPR.

Residues 1-23 (MGRFIFVSFGLLVVFLSLSGTGA) form the signal peptide. 3 cysteine pairs are disulfide-bonded: Cys-25/Cys-36, Cys-53/Cys-150, and Cys-125/Cys-142. The region spanning 32–151 (FRRYCYKPFK…CGERNLFMCK (120 aa)) is the C-type lectin domain.

Belongs to the snaclec family. Heterodimer of subunits alpha and beta; disulfide-linked. In terms of tissue distribution, expressed by the venom gland.

The protein resides in the secreted. Its function is as follows. Snaclec that induces platelet aggregation in either human platelet rich plasma (PRP) or washed platelet suspensions. It causes aggregation in a dose-dependent manner even in the absence of various platelet agonists such as ADP or von Willebrand factor (vWF). Interestingly, it does not induce aggregation in rabbit PRP. A monoclonal antibody against the platelet GPIb receptor blocks the aggregation induced by trimecetin, suggesting that it acts by binding to GPIb (GP1BA/GP1BB). This chain is Snaclec trimecetin subunit alpha, found in Protobothrops mucrosquamatus (Taiwan habu).